A 638-amino-acid polypeptide reads, in one-letter code: SUMO-activating enzyme subunit 2 (638 aa).

Residues 24–29 (GAGGIG), aspartate 48, 56–59 (NLNR), lysine 72, 95–96 (SI), and 117–122 (DNRAAR) contribute to the ATP site. Zn(2+) contacts are provided by cysteine 158 and cysteine 161. A Glycyl lysine isopeptide (Lys-Gly) (interchain with G-Cter in SUMO1) cross-link involves residue lysine 164. Catalysis depends on cysteine 173, which acts as the Glycyl thioester intermediate. Residue lysine 190 forms a Glycyl lysine isopeptide (Lys-Gly) (interchain with G-Cter in SUMO) linkage. The interval 202-233 (ADQEVSPDRADPEAAWEPTEAEARARASNEDG) is disordered. Phosphoserine is present on serine 207. Over residues 222–233 (AEARARASNEDG) the composition is skewed to basic and acidic residues. A Glycyl lysine isopeptide (Lys-Gly) (interchain with G-Cter in SUMO1); alternate cross-link involves residue lysine 236. Glycyl lysine isopeptide (Lys-Gly) (interchain with G-Cter in SUMO2); alternate cross-links involve residues lysine 236 and lysine 257. Glycyl lysine isopeptide (Lys-Gly) (interchain with G-Cter in SUMO); alternate cross-links involve residues lysine 257 and lysine 271. N6-acetyllysine; alternate is present on lysine 271. Lysine 275 is covalently cross-linked (Glycyl lysine isopeptide (Lys-Gly) (interchain with G-Cter in SUMO)). Lysine 369 participates in a covalent cross-link: Glycyl lysine isopeptide (Lys-Gly) (interchain with G-Cter in SUMO2). A Glycyl lysine isopeptide (Lys-Gly) (interchain with G-Cter in SUMO1); alternate cross-link involves residue lysine 418. Lysine 418 is covalently cross-linked (Glycyl lysine isopeptide (Lys-Gly) (interchain with G-Cter in SUMO2); alternate). Zn(2+) is bound by residues cysteine 439 and cysteine 442. At serine 505 the chain carries Phosphoserine. A Glycyl lysine isopeptide (Lys-Gly) (interchain with G-Cter in SUMO2) cross-link involves residue lysine 538. 2 positions are modified to phosphoserine: serine 548 and serine 590. The span at 548–561 (SPEKVGPKQAEDAA) shows a compositional bias: basic and acidic residues. The segment at 548–638 (SPEKVGPKQA…EDPDDVIALD (91 aa)) is disordered. The span at 581 to 594 (EQDDVLIVDSDEEG) shows a compositional bias: acidic residues. Over residues 603–614 (GDDKARKRKLEE) the composition is skewed to basic and acidic residues. A Glycyl lysine isopeptide (Lys-Gly) (interchain with G-Cter in SUMO) cross-link involves residue lysine 609. Residue lysine 611 forms a Glycyl lysine isopeptide (Lys-Gly) (interchain with G-Cter in SUMO); alternate linkage. Lysine 611 is modified (N6-acetyllysine; alternate). A Glycyl lysine isopeptide (Lys-Gly) (interchain with G-Cter in SUMO) cross-link involves residue lysine 621. Residues 628 to 638 (MEDPDDVIALD) show a composition bias toward acidic residues.

This sequence belongs to the ubiquitin-activating E1 family. Heterodimer of SAE1 and UBA2/SAE2. The heterodimer corresponds to the two domains that are encoded on a single polypeptide chain in ubiquitin-activating enzyme E1. Interacts with UBE2I. Sumoylated with SUMO1 and SUMO2/3 and by UBC9. Sumoylation at Lys-236 inhibits enzymatic activity. Sumoylation at the C-terminal lysine cluster plays an essential role in nuclear trafficking. In terms of tissue distribution, broadly expressed, with highest levels in testis.

It is found in the cytoplasm. The protein resides in the nucleus. It functions in the pathway protein modification; protein sumoylation. Functionally, the heterodimer acts as an E1 ligase for SUMO1, SUMO2, SUMO3, and probably SUMO4. It mediates ATP-dependent activation of SUMO proteins followed by formation of a thioester bond between a SUMO protein and a conserved active site cysteine residue on UBA2/SAE2. The chain is SUMO-activating enzyme subunit 2 (Uba2) from Mus musculus (Mouse).